The following is a 517-amino-acid chain: Phospholipase C C (517 aa).

Residues 1–39 (MVSQGAFAGMSRRAFLAKAAGAGAAAVLTDWAAPVIEKA) constitute a signal peptide (tat-type signal).

The protein belongs to the bacterial phospholipase C family. In terms of processing, predicted to be exported by the Tat system. The position of the signal peptide cleavage has not been experimentally proven.

It is found in the secreted. The protein resides in the cell wall. It catalyses the reaction a 1,2-diacyl-sn-glycero-3-phosphocholine + H2O = phosphocholine + a 1,2-diacyl-sn-glycerol + H(+). The enzyme catalyses 1,2-dihexadecanoyl-sn-glycero-3-phosphocholine + H2O = 1,2-dihexadecanoyl-sn-glycerol + phosphocholine + H(+). Its function is as follows. Involved in virulence. Induces cytotoxic effects on mouse macrophage cell lines, via direct or indirect enzymatic hydrolysis of cell membrane phospholipids. Hydrolyzes phosphatidylcholine. Does not have hemolytic activity. This Mycobacterium tuberculosis (strain ATCC 25618 / H37Rv) protein is Phospholipase C C.